A 520-amino-acid chain; its full sequence is Protein root UVB sensitive 4 (520 aa).

The next 2 membrane-spanning stretches (helical) occupy residues 275–295 and 301–321; these read IQTVCFDNLGLLLAVLLNMLF and LQACLPFVLYPIFSTFDLLGI.

It belongs to the RUS1 family.

The protein resides in the membrane. The polypeptide is Protein root UVB sensitive 4 (Arabidopsis thaliana (Mouse-ear cress)).